The chain runs to 347 residues: MKEESELARIKSSKAVVSKTIKEGKQGRKIPIWLMRQAGRSLPEYRRAVKDTSSFMEICYNTDLVVELTLQPVARFSMDAAIIFSDILIVADVLGCDVDFIRGVGPTIKPVKNFKELRNPQKIETKTLPILNAIRKVRDKLPEEKSLIGFAGGPWTVASYIIEGRSSKTFSKVLNLHPSSLEQIIEQITEVTISYLVKQIEFGADVIQLFDSNAGVLSGELFEECVIKPTKKIVSAIKGKFPDFPIIGFPKSAGSLYKDYCEKTGVSAVSIDYNVPIEWAKENLKIPLQGNLNPSLLAYNKMEAIKETKRIIDCFRDLPFIFNLGHGVLPNTPIENIAALVDLVKSQ.

Substrate is bound by residues 36-40, aspartate 86, tyrosine 160, serine 212, and histidine 326; that span reads RQAGR.

The protein belongs to the uroporphyrinogen decarboxylase family. As to quaternary structure, homodimer.

The protein localises to the cytoplasm. It carries out the reaction uroporphyrinogen III + 4 H(+) = coproporphyrinogen III + 4 CO2. The protein operates within porphyrin-containing compound metabolism; protoporphyrin-IX biosynthesis; coproporphyrinogen-III from 5-aminolevulinate: step 4/4. Its function is as follows. Catalyzes the decarboxylation of four acetate groups of uroporphyrinogen-III to yield coproporphyrinogen-III. In Wolbachia sp. subsp. Brugia malayi (strain TRS), this protein is Uroporphyrinogen decarboxylase.